The chain runs to 142 residues: Hemoglobin F-I (142 aa).

In terms of domain architecture, Globin spans 2–142 (GLTTAQIKAI…AAGVLVAAMK (141 aa)). Heme b is bound at residue His-95.

Belongs to the globin family. Homotetramer.

Functionally, hemoglobin F-I appears to function in storage, rather than transport of oxygen. The protein is Hemoglobin F-I of Urechis caupo (Innkeeper worm).